The sequence spans 334 residues: Aspartate carbamoyltransferase catalytic subunit (334 aa).

Arginine 70 and threonine 71 together coordinate carbamoyl phosphate. Lysine 98 serves as a coordination point for L-aspartate. The carbamoyl phosphate site is built by arginine 120, histidine 150, and glutamine 153. Residues arginine 183 and arginine 238 each coordinate L-aspartate. Carbamoyl phosphate contacts are provided by glycine 279 and proline 280.

Belongs to the aspartate/ornithine carbamoyltransferase superfamily. ATCase family. As to quaternary structure, heterododecamer (2C3:3R2) of six catalytic PyrB chains organized as two trimers (C3), and six regulatory PyrI chains organized as three dimers (R2).

The catalysed reaction is carbamoyl phosphate + L-aspartate = N-carbamoyl-L-aspartate + phosphate + H(+). It participates in pyrimidine metabolism; UMP biosynthesis via de novo pathway; (S)-dihydroorotate from bicarbonate: step 2/3. Its function is as follows. Catalyzes the condensation of carbamoyl phosphate and aspartate to form carbamoyl aspartate and inorganic phosphate, the committed step in the de novo pyrimidine nucleotide biosynthesis pathway. The sequence is that of Aspartate carbamoyltransferase catalytic subunit from Marinomonas sp. (strain MWYL1).